Here is a 415-residue protein sequence, read N- to C-terminus: Squalene synthase 1 (415 aa).

The next 2 membrane-spanning stretches (helical) occupy residues 281–301 and 391–411; these read AIFR…ALCF and LIAI…SNLL.

The protein belongs to the phytoene/squalene synthase family. It depends on Mg(2+) as a cofactor. Mn(2+) is required as a cofactor. Mostly expressed in the shoot apex (buds) and roots, and, to a lower extent, in stems, leaves, flowers and seeds.

The protein resides in the endoplasmic reticulum membrane. The catalysed reaction is 2 (2E,6E)-farnesyl diphosphate + NADH + H(+) = squalene + 2 diphosphate + NAD(+). The enzyme catalyses 2 (2E,6E)-farnesyl diphosphate + NADPH + H(+) = squalene + 2 diphosphate + NADP(+). It participates in terpene metabolism; lanosterol biosynthesis; lanosterol from farnesyl diphosphate: step 1/3. Component of the triterpene saponins (e.g. ginsenosides or panaxosides) and phytosterols biosynthetic pathways. Catalyzes the biosynthesis of squalene. The protein is Squalene synthase 1 of Panax ginseng (Korean ginseng).